We begin with the raw amino-acid sequence, 348 residues long: Glycerol-1-phosphate dehydrogenase [NAD(P)+] (348 aa).

NAD(+) contacts are provided by residues 94–98 and 116–119; these read GKPID and TAAS. Substrate is bound at residue Asp-121. Ser-125 lines the NAD(+) pocket. Asp-168 contacts substrate. Residues Asp-168 and His-248 each coordinate Zn(2+). His-252 is a substrate binding site. Residue His-264 coordinates Zn(2+).

It belongs to the glycerol-1-phosphate dehydrogenase family. The cofactor is Zn(2+).

Its subcellular location is the cytoplasm. The enzyme catalyses sn-glycerol 1-phosphate + NAD(+) = dihydroxyacetone phosphate + NADH + H(+). It catalyses the reaction sn-glycerol 1-phosphate + NADP(+) = dihydroxyacetone phosphate + NADPH + H(+). Its pathway is membrane lipid metabolism; glycerophospholipid metabolism. Its function is as follows. Catalyzes the NAD(P)H-dependent reduction of dihydroxyacetonephosphate (DHAP or glycerone phosphate) to glycerol 1-phosphate (G1P). The G1P thus generated is used as the glycerophosphate backbone of phospholipids in the cellular membranes of Archaea. The polypeptide is Glycerol-1-phosphate dehydrogenase [NAD(P)+] (Haloquadratum walsbyi (strain DSM 16790 / HBSQ001)).